The following is a 189-amino-acid chain: Low affinity inorganic phosphate transporter 2 (189 aa).

Residues 1–55 lie on the Cytoplasmic side of the membrane; it reads TARYTALVAKDAKRAAADMGKVLHVEIDPEDAKVERMAKDESNQFGLFSWEFVRR. The chain crosses the membrane as a helical span at residues 56-76; it reads HGLHLFGTCSTWFLLDIAFYS. The Extracellular segment spans residues 77–111; sequence QNLFQKDVFTAIGWIPPAKTMNAVQEVYKIARAQT. The chain crosses the membrane as a helical span at residues 112–132; it reads LIALCSTVPGYWFTVAFIDII. At 133 to 134 the chain is on the cytoplasmic side; that stretch reads GR. Residues 135–155 form a helical membrane-spanning segment; the sequence is FAIQLMGFFFMTVFMFAIAIP. Residues 156–165 lie on the Extracellular side of the membrane; that stretch reads YHHWTLQENR. A helical membrane pass occupies residues 166–186; it reads IGFVIMYSLTFFFANFGPNAT. Residues 187 to 189 are Cytoplasmic-facing; that stretch reads TFV.

This sequence belongs to the major facilitator superfamily. Phosphate:H(+) symporter (TC 2.A.1.9) family.

The protein resides in the cell membrane. It carries out the reaction phosphate(in) + H(+)(in) = phosphate(out) + H(+)(out). Low-affinity transporter for external inorganic phosphate (Pi). This chain is Low affinity inorganic phosphate transporter 2, found in Petunia hybrida (Petunia).